The sequence spans 575 residues: Alpha-(1,6)-fucosyltransferase (575 aa).

Over 1-9 the chain is Cytoplasmic; that stretch reads MRAWTGSWR. A helical; Signal-anchor for type II membrane protein membrane pass occupies residues 10–30; the sequence is WIMLILFAWGTLLFYIGGHLV. At 31–575 the chain is on the lumenal side; that stretch reads RDNDHPDHSS…KYPTYPEAEK (545 aa). 3 disulfide bridges follow: C204–C266, C212–C230, and C218–C222. The GT23 domain occupies 206–493; the sequence is KARKLVCNIN…PDASANFHSL (288 aa). S278 carries the post-translational modification Phosphoserine. Residues 299–305 carry the SH3-binding motif; that stretch reads PRPPYLP. Residues 365-366 form an important for donor substrate binding region; that stretch reads RR. Residues C465 and C472 are joined by a disulfide bond. One can recognise an SH3 domain in the interval 502–563; the sequence is QNAHNQIAVY…PSYKVREKIE (62 aa).

It belongs to the glycosyltransferase 23 family. Tyrosine phosphorylated by PKDCC/VLK.

The protein resides in the golgi apparatus. The protein localises to the golgi stack membrane. It carries out the reaction N(4)-{beta-D-GlcNAc-(1-&gt;2)-alpha-D-Man-(1-&gt;3)-[beta-D-GlcNAc-(1-&gt;2)-alpha-D-Man-(1-&gt;6)]-beta-D-Man-(1-&gt;4)-beta-D-GlcNAc-(1-&gt;4)-beta-D-GlcNAc}-L-asparaginyl-[protein] + GDP-beta-L-fucose = an N(4)-{beta-D-GlcNAc-(1-&gt;2)-alpha-D-Man-(1-&gt;3)-[beta-D-GlcNAc-(1-&gt;2)-alpha-D-Man-(1-&gt;6)]-beta-D-Man-(1-&gt;4)-beta-D-GlcNAc-(1-&gt;4)-[alpha-L-Fuc-(1-&gt;6)]-beta-D-GlcNAc}-L-asparaginyl-[protein] + GDP + H(+). Its pathway is protein modification; protein glycosylation. Catalyzes the addition of fucose in alpha 1-6 linkage to the first GlcNAc residue, next to the peptide chains in N-glycans. This is Alpha-(1,6)-fucosyltransferase (Fut8) from Mus musculus (Mouse).